The primary structure comprises 177 residues: PLAC8-like protein 1 (177 aa).

Belongs to the cornifelin family.

The sequence is that of PLAC8-like protein 1 (Plac8l1) from Mus musculus (Mouse).